Here is a 221-residue protein sequence, read N- to C-terminus: 7-cyano-7-deazaguanine synthase (221 aa).

Residue 8-18 (LSGGMDSAAVI) coordinates ATP. Zn(2+) contacts are provided by Cys186, Cys196, Cys199, and Cys202.

This sequence belongs to the QueC family. It depends on Zn(2+) as a cofactor.

The catalysed reaction is 7-carboxy-7-deazaguanine + NH4(+) + ATP = 7-cyano-7-deazaguanine + ADP + phosphate + H2O + H(+). Its pathway is purine metabolism; 7-cyano-7-deazaguanine biosynthesis. Catalyzes the ATP-dependent conversion of 7-carboxy-7-deazaguanine (CDG) to 7-cyano-7-deazaguanine (preQ(0)). This chain is 7-cyano-7-deazaguanine synthase, found in Stenotrophomonas maltophilia (strain R551-3).